We begin with the raw amino-acid sequence, 154 residues long: Endoribonuclease YbeY (154 aa).

Zn(2+) contacts are provided by histidine 113, histidine 117, and histidine 123.

Belongs to the endoribonuclease YbeY family. Requires Zn(2+) as cofactor.

It is found in the cytoplasm. Its function is as follows. Single strand-specific metallo-endoribonuclease involved in late-stage 70S ribosome quality control and in maturation of the 3' terminus of the 16S rRNA. This is Endoribonuclease YbeY from Verminephrobacter eiseniae (strain EF01-2).